A 138-amino-acid polypeptide reads, in one-letter code: Basic phospholipase A2 BP-III (138 aa).

Residues 1-16 form the signal peptide; the sequence is MRTLWIMAVLLVGVDG. Intrachain disulfides connect cysteine 42-cysteine 132, cysteine 44-cysteine 60, cysteine 59-cysteine 112, cysteine 65-cysteine 138, cysteine 66-cysteine 105, cysteine 73-cysteine 98, and cysteine 91-cysteine 103. Positions 45 and 47 each coordinate Ca(2+). Residue histidine 63 is part of the active site. Aspartate 106 is a catalytic residue.

This sequence belongs to the phospholipase A2 family. Group II subfamily. K49 sub-subfamily. It depends on Ca(2+) as a cofactor. Expressed by the venom gland.

The protein resides in the secreted. The enzyme catalyses a 1,2-diacyl-sn-glycero-3-phosphocholine + H2O = a 1-acyl-sn-glycero-3-phosphocholine + a fatty acid + H(+). In terms of biological role, snake venom phospholipase A2 (PLA2) that has low phospholipase A2 activity. Shows anticoagulant activities, strong myolytic activity, infiltration of polymorphonuclear cells, and edema in stromal tissues. Induces cell death of Jurkat cells in a concentration dependent manner. PLA2 catalyzes the calcium-dependent hydrolysis of the 2-acyl groups in 3-sn-phosphoglycerides. This is Basic phospholipase A2 BP-III from Protobothrops flavoviridis (Habu).